The chain runs to 219 residues: Small ribosomal subunit protein uS4 (219 aa).

In terms of domain architecture, S4 RNA-binding spans R112–H174. A disordered region spans residues K193–R219. A compositionally biased stretch (basic and acidic residues) spans K199–G210.

It belongs to the universal ribosomal protein uS4 family. Part of the 30S ribosomal subunit. Contacts protein S5. The interaction surface between S4 and S5 is involved in control of translational fidelity.

In terms of biological role, one of the primary rRNA binding proteins, it binds directly to 16S rRNA where it nucleates assembly of the body of the 30S subunit. Its function is as follows. With S5 and S12 plays an important role in translational accuracy. The protein is Small ribosomal subunit protein uS4 of Methanosarcina mazei (strain ATCC BAA-159 / DSM 3647 / Goe1 / Go1 / JCM 11833 / OCM 88) (Methanosarcina frisia).